Here is an 86-residue protein sequence, read N- to C-terminus: Omega-theraphotoxin-Hhn1a 1 (86 aa).

Positions 1–21 (MKSIVFVALFGLALLAVVCSA) are cleaved as a signal peptide. A propeptide spanning residues 22 to 50 (SEDAHKELLKEVVRAMVVDKTDAVQAEER) is cleaved from the precursor. Intrachain disulfides connect Cys52–Cys66, Cys59–Cys71, and Cys65–Cys78.

The protein belongs to the neurotoxin 10 (Hwtx-1) family. 17 (Hntx-9) subfamily. In terms of tissue distribution, expressed by the venom gland.

Its subcellular location is the secreted. Its function is as follows. Ion channel inhibitor. This is Omega-theraphotoxin-Hhn1a 1 from Cyriopagopus hainanus (Chinese bird spider).